Consider the following 241-residue polypeptide: Triosephosphate isomerase (241 aa).

9–11 (NWK) lines the substrate pocket. The active-site Electrophile is histidine 88. Glutamate 158 (proton acceptor) is an active-site residue. Substrate contacts are provided by residues glycine 164, serine 203, and 224-225 (GG).

It belongs to the triosephosphate isomerase family. As to quaternary structure, homodimer.

It localises to the cytoplasm. It catalyses the reaction D-glyceraldehyde 3-phosphate = dihydroxyacetone phosphate. Its pathway is carbohydrate biosynthesis; gluconeogenesis. It participates in carbohydrate degradation; glycolysis; D-glyceraldehyde 3-phosphate from glycerone phosphate: step 1/1. In terms of biological role, involved in the gluconeogenesis. Catalyzes stereospecifically the conversion of dihydroxyacetone phosphate (DHAP) to D-glyceraldehyde-3-phosphate (G3P). In Dichelobacter nodosus (strain VCS1703A), this protein is Triosephosphate isomerase.